We begin with the raw amino-acid sequence, 272 residues long: Dermonecrotic toxin SpeSicTox-betaIB2b (272 aa).

The active site involves His5. The Mg(2+) site is built by Glu25 and Asp27. His41 (nucleophile) is an active-site residue. Disulfide bonds link Cys45–Cys51 and Cys47–Cys191. Residue Asp85 coordinates Mg(2+).

It belongs to the arthropod phospholipase D family. Class II subfamily. It depends on Mg(2+) as a cofactor. Expressed by the venom gland.

It localises to the secreted. It catalyses the reaction an N-(acyl)-sphingosylphosphocholine = an N-(acyl)-sphingosyl-1,3-cyclic phosphate + choline. The catalysed reaction is an N-(acyl)-sphingosylphosphoethanolamine = an N-(acyl)-sphingosyl-1,3-cyclic phosphate + ethanolamine. The enzyme catalyses a 1-acyl-sn-glycero-3-phosphocholine = a 1-acyl-sn-glycero-2,3-cyclic phosphate + choline. It carries out the reaction a 1-acyl-sn-glycero-3-phosphoethanolamine = a 1-acyl-sn-glycero-2,3-cyclic phosphate + ethanolamine. Dermonecrotic toxins cleave the phosphodiester linkage between the phosphate and headgroup of certain phospholipids (sphingolipid and lysolipid substrates), forming an alcohol (often choline) and a cyclic phosphate. This toxin acts on sphingomyelin (SM). It may also act on ceramide phosphoethanolamine (CPE), lysophosphatidylcholine (LPC) and lysophosphatidylethanolamine (LPE), but not on lysophosphatidylserine (LPS), and lysophosphatidylglycerol (LPG). It acts by transphosphatidylation, releasing exclusively cyclic phosphate products as second products. Induces dermonecrosis, hemolysis, increased vascular permeability, edema, inflammatory response, and platelet aggregation. In Sicarius peruensis (Six-eyed sand spider), this protein is Dermonecrotic toxin SpeSicTox-betaIB2b.